We begin with the raw amino-acid sequence, 166 residues long: Phosphopantetheine adenylyltransferase (166 aa).

Residue serine 10 participates in substrate binding. Residues 10–11 and histidine 18 contribute to the ATP site; that span reads SF. 3 residues coordinate substrate: lysine 42, alanine 79, and arginine 93. Residues 94-96, glutamate 104, and 129-135 contribute to the ATP site; these read GLR and VRPITAT.

It belongs to the bacterial CoaD family. Homohexamer. Mg(2+) is required as a cofactor.

It localises to the cytoplasm. It catalyses the reaction (R)-4'-phosphopantetheine + ATP + H(+) = 3'-dephospho-CoA + diphosphate. It participates in cofactor biosynthesis; coenzyme A biosynthesis; CoA from (R)-pantothenate: step 4/5. In terms of biological role, reversibly transfers an adenylyl group from ATP to 4'-phosphopantetheine, yielding dephospho-CoA (dPCoA) and pyrophosphate. The polypeptide is Phosphopantetheine adenylyltransferase (Methylobacterium nodulans (strain LMG 21967 / CNCM I-2342 / ORS 2060)).